The primary structure comprises 795 residues: Protocadherin beta-4 (795 aa).

Residues 1-27 (MKKLGRIHPNRQVLAFILMVFLSQVRL) form the signal peptide. Residues 28 to 689 (EPIRYSVLEE…SQADSLTVYL (662 aa)) lie on the Extracellular side of the membrane. Cadherin domains lie at 34 to 132 (VLEE…SPVF), 137 to 241 (VLLK…APEF), 246 to 346 (YGVQ…PPEL), 351 to 450 (LTSS…APAF), and 455 to 560 (YTLF…SPFV). Asn-183 is a glycosylation site (N-linked (GlcNAc...) asparagine). A glycan (N-linked (GlcNAc...) asparagine) is linked at Asn-417. An N-linked (GlcNAc...) asparagine glycan is attached at Asn-566. The Cadherin 6 domain maps to 567 to 670 (GSAPCTELVP…LVDGFSQPYL (104 aa)). Residues 690–710 (VVALASVSSLFLFSVLLFVAV) traverse the membrane as a helical segment. At 711–795 (RLCRRSRAAS…PKFRNSLVFS (85 aa)) the chain is on the cytoplasmic side.

It localises to the cell membrane. Potential calcium-dependent cell-adhesion protein. May be involved in the establishment and maintenance of specific neuronal connections in the brain. The sequence is that of Protocadherin beta-4 (PCDHB4) from Pan troglodytes (Chimpanzee).